The following is a 229-amino-acid chain: MGRFVRRLLRNLLLALFLVLVAGPVVAVILYRFIPPPVTPLMVIRAVEGRGLDHRWRPMDKISPALPRVLIAAEDAKFCEHRGFDFEALQKAYENNESGRKIRGGSTISQQTAKNVFLWPGRSYVRKGLEAWFTVLIETFWGKKRIMEVYMNSIEYGSGIYGAEAAAQRYFGVSAAKLTQAQSARLAAILPSPLKWKVIKPGKYVAKRTKKIGKATGAVRRDGLADCVA.

The helical transmembrane segment at 11–31 threads the bilayer; sequence NLLLALFLVLVAGPVVAVILY.

The protein belongs to the glycosyltransferase 51 family.

It is found in the cell inner membrane. It catalyses the reaction [GlcNAc-(1-&gt;4)-Mur2Ac(oyl-L-Ala-gamma-D-Glu-L-Lys-D-Ala-D-Ala)](n)-di-trans,octa-cis-undecaprenyl diphosphate + beta-D-GlcNAc-(1-&gt;4)-Mur2Ac(oyl-L-Ala-gamma-D-Glu-L-Lys-D-Ala-D-Ala)-di-trans,octa-cis-undecaprenyl diphosphate = [GlcNAc-(1-&gt;4)-Mur2Ac(oyl-L-Ala-gamma-D-Glu-L-Lys-D-Ala-D-Ala)](n+1)-di-trans,octa-cis-undecaprenyl diphosphate + di-trans,octa-cis-undecaprenyl diphosphate + H(+). Its pathway is cell wall biogenesis; peptidoglycan biosynthesis. In terms of biological role, peptidoglycan polymerase that catalyzes glycan chain elongation from lipid-linked precursors. This Caulobacter vibrioides (strain ATCC 19089 / CIP 103742 / CB 15) (Caulobacter crescentus) protein is Biosynthetic peptidoglycan transglycosylase.